Here is a 608-residue protein sequence, read N- to C-terminus: DNA mismatch repair protein MutL (608 aa).

Residues 363-397 are disordered; sequence ASLAMARKPDPPRFHETARPQPDPRHTPGTESVSV. Residues 369-390 show a composition bias toward basic and acidic residues; the sequence is RKPDPPRFHETARPQPDPRHTP.

This sequence belongs to the DNA mismatch repair MutL/HexB family.

Functionally, this protein is involved in the repair of mismatches in DNA. It is required for dam-dependent methyl-directed DNA mismatch repair. May act as a 'molecular matchmaker', a protein that promotes the formation of a stable complex between two or more DNA-binding proteins in an ATP-dependent manner without itself being part of a final effector complex. In Pelobacter propionicus (strain DSM 2379 / NBRC 103807 / OttBd1), this protein is DNA mismatch repair protein MutL.